The following is a 157-amino-acid chain: 6,7-dimethyl-8-ribityllumazine synthase (157 aa).

Residues phenylalanine 22, 57–59, and 81–83 contribute to the 5-amino-6-(D-ribitylamino)uracil site; these read AYE and TVI. 86 to 87 provides a ligand contact to (2S)-2-hydroxy-3-oxobutyl phosphate; that stretch reads GT. The active-site Proton donor is the histidine 89. Phenylalanine 114 is a 5-amino-6-(D-ribitylamino)uracil binding site. Arginine 128 is a (2S)-2-hydroxy-3-oxobutyl phosphate binding site.

This sequence belongs to the DMRL synthase family. As to quaternary structure, forms an icosahedral capsid composed of 60 subunits, arranged as a dodecamer of pentamers.

It carries out the reaction (2S)-2-hydroxy-3-oxobutyl phosphate + 5-amino-6-(D-ribitylamino)uracil = 6,7-dimethyl-8-(1-D-ribityl)lumazine + phosphate + 2 H2O + H(+). Its pathway is cofactor biosynthesis; riboflavin biosynthesis; riboflavin from 2-hydroxy-3-oxobutyl phosphate and 5-amino-6-(D-ribitylamino)uracil: step 1/2. Catalyzes the formation of 6,7-dimethyl-8-ribityllumazine by condensation of 5-amino-6-(D-ribitylamino)uracil with 3,4-dihydroxy-2-butanone 4-phosphate. This is the penultimate step in the biosynthesis of riboflavin. The chain is 6,7-dimethyl-8-ribityllumazine synthase from Haemophilus influenzae (strain 86-028NP).